The primary structure comprises 485 residues: Glutamyl-tRNA(Gln) amidotransferase subunit A (485 aa).

Residues Lys-78 and Ser-153 each act as charge relay system in the active site. Ser-177 acts as the Acyl-ester intermediate in catalysis.

Belongs to the amidase family. GatA subfamily. Heterotrimer of A, B and C subunits.

It carries out the reaction L-glutamyl-tRNA(Gln) + L-glutamine + ATP + H2O = L-glutaminyl-tRNA(Gln) + L-glutamate + ADP + phosphate + H(+). Allows the formation of correctly charged Gln-tRNA(Gln) through the transamidation of misacylated Glu-tRNA(Gln) in organisms which lack glutaminyl-tRNA synthetase. The reaction takes place in the presence of glutamine and ATP through an activated gamma-phospho-Glu-tRNA(Gln). In Desulfatibacillum aliphaticivorans, this protein is Glutamyl-tRNA(Gln) amidotransferase subunit A.